A 273-amino-acid chain; its full sequence is Proteasome subunit beta type-10 (273 aa).

Residue Met1 is modified to N-acetylmethionine. Residues 1-39 (MLKPALEPRGGFSFENCQRNASLERVLPGLKVPHARKTG) constitute a propeptide, removed in mature form. The active-site Nucleophile is the Thr40. Ser230 carries the phosphoserine modification.

It belongs to the peptidase T1B family. In terms of assembly, the 26S proteasome consists of a 20S proteasome core and two 19S regulatory subunits. The 20S proteasome core is composed of 28 subunits that are arranged in four stacked rings, resulting in a barrel-shaped structure. The two end rings are each formed by seven alpha subunits, and the two central rings are each formed by seven beta subunits. The catalytic chamber with the active sites is on the inside of the barrel. Component of the immunoproteasome, where it displaces the equivalent housekeeping subunit PSMB7. Component of the spermatoproteasome, a form of the proteasome specifically found in testis. As to quaternary structure, (Microbial infection) Interacts with HIV-1 TAT protein. Post-translationally, autocleaved. The resulting N-terminal Thr residue of the mature subunit is responsible for the nucleophile proteolytic activity.

The protein localises to the cytoplasm. It localises to the nucleus. It carries out the reaction Cleavage of peptide bonds with very broad specificity.. Its function is as follows. The proteasome is a multicatalytic proteinase complex which is characterized by its ability to cleave peptides with Arg, Phe, Tyr, Leu, and Glu adjacent to the leaving group at neutral or slightly basic pH. The proteasome has an ATP-dependent proteolytic activity. This subunit is involved in antigen processing to generate class I binding peptides. This Homo sapiens (Human) protein is Proteasome subunit beta type-10 (PSMB10).